A 1600-amino-acid chain; its full sequence is E3 ubiquitin-protein ligase listerin (1600 aa).

HEAT repeat units follow at residues 31 to 65 (SSVP…CVKK), 114 to 150 (KTLP…DSDQ), 161 to 202 (GKLL…SSMA), 245 to 288 (YQLV…DLLR), 291 to 344 (ISVT…PDYA), 526 to 606 (RNYK…AALS), 853 to 904 (YTTN…DIRT), 962 to 986 (YASK…GAKF), 1045 to 1083 (LYNV…WVQT), 1289 to 1324 (VDVR…KADN), and 1325 to 1369 (SLNA…EEGT). Residues 1537–1583 (CPICYAVVSADKKLPDKRCSTCNNLFHRLCLYKWFQNSNKNTCPLCR) form an RING-type; degenerate zinc finger.

The protein belongs to the LTN1 family. As to quaternary structure, component of the ribosome quality control complex (RQC), composed of the E3 ubiquitin ligase RKR1/LTN1, RQC1 and RQC2, as well as CDC48 and its ubiquitin-binding cofactors associated with the 60S ribosomal subunits.

It localises to the nucleus. The protein localises to the cytoplasm. The protein resides in the cytosol. The enzyme catalyses S-ubiquitinyl-[E2 ubiquitin-conjugating enzyme]-L-cysteine + [acceptor protein]-L-lysine = [E2 ubiquitin-conjugating enzyme]-L-cysteine + N(6)-ubiquitinyl-[acceptor protein]-L-lysine.. Its pathway is protein modification; protein ubiquitination. In terms of biological role, E3 ubiquitin-protein ligase component of the ribosome quality control complex (RQC), a ribosome-associated complex that mediates ubiquitination and extraction of incompletely synthesized nascent chains for proteasomal degradation. Mediates ubiquitination of proteins derived from mRNAs lacking stop codons (non-stop proteins) and other translation arrest products induced by poly-lysine sequences and tandem rare codons. Ubiquitination leads to CDC48 recruitment for extraction and degradation of the incomplete translation product. May indirectly play a role in chromatin function and transcription. The sequence is that of E3 ubiquitin-protein ligase listerin (rkr-1) from Neurospora crassa (strain ATCC 24698 / 74-OR23-1A / CBS 708.71 / DSM 1257 / FGSC 987).